A 492-amino-acid polypeptide reads, in one-letter code: Catalase isozyme 2 (492 aa).

Residues His65 and Asn138 contribute to the active site. Tyr348 contributes to the heme binding site.

The protein belongs to the catalase family. Homotetramer. Heme serves as cofactor.

The protein localises to the peroxisome. The protein resides in the glyoxysome. The catalysed reaction is 2 H2O2 = O2 + 2 H2O. Functionally, occurs in almost all aerobically respiring organisms and serves to protect cells from the toxic effects of hydrogen peroxide. The protein is Catalase isozyme 2 (CAT2) of Solanum tuberosum (Potato).